The primary structure comprises 242 residues: Myogenic factor 6 (242 aa).

Positions 30 to 63 (GSPLYPGSDGTLSPCQDQLPPEAGSDSSGEEHVL) are disordered. In terms of domain architecture, bHLH spans 93–144 (DRRKAATLRERRRLKKINEAFEALKRRTVANPNQRLPKVEILRSAISYIERL). A disordered region spans residues 190–210 (ASDHSRALGGSPKAGGSMVES).

In terms of assembly, efficient DNA binding requires dimerization with another bHLH protein. In terms of tissue distribution, skeletal muscle.

Its subcellular location is the nucleus. Its function is as follows. Involved in muscle differentiation (myogenic factor). Induces fibroblasts to differentiate into myoblasts. Probable sequence specific DNA-binding protein. The chain is Myogenic factor 6 (MYF6) from Gallus gallus (Chicken).